A 252-amino-acid chain; its full sequence is ATP synthase subunit a (252 aa).

The next 6 helical transmembrane spans lie at 29-49 (FTNV…FLFI), 87-107 (FFPL…IGLF), 117-137 (IMIT…YGFY), 146-166 (LFVP…IEII), 196-216 (FIVS…LPLI), and 219-239 (VAIT…FTVL).

The protein belongs to the ATPase A chain family. F-type ATPases have 2 components, CF(1) - the catalytic core - and CF(0) - the membrane proton channel. CF(1) has five subunits: alpha(3), beta(3), gamma(1), delta(1), epsilon(1). CF(0) has three main subunits: a(1), b(2) and c(9-12). The alpha and beta chains form an alternating ring which encloses part of the gamma chain. CF(1) is attached to CF(0) by a central stalk formed by the gamma and epsilon chains, while a peripheral stalk is formed by the delta and b chains.

The protein resides in the cell inner membrane. Key component of the proton channel; it plays a direct role in the translocation of protons across the membrane. This is ATP synthase subunit a from Bartonella tribocorum (strain CIP 105476 / IBS 506).